We begin with the raw amino-acid sequence, 499 residues long: CD-NTase-associated protein 4 (499 aa).

The segment at 1–226 (MATSVLANWH…DFRFDGAARA (226 aa)) is N-terminal endonuclease domain. Catalysis depends on residues aspartate 49 and glutamine 72. Residue aspartate 49 participates in Mg(2+) binding. Isoleucine 73 contacts Mg(2+). The active site involves lysine 74. Residues 258 to 464 (FRNVALRSFS…HIFSAAPNAV (207 aa)) form a C-terminal SAVED domain region.

Belongs to the Cap4 nuclease family. In terms of assembly, a monomer in the absence of ligand, in its presence it forms oligomers. Mg(2+) serves as cofactor.

DNase activity is activated upon ligand binding (cAAG). Inhibited by EDTA. Functionally, effector DNase of a CBASS antivirus system. CBASS (cyclic oligonucleotide-based antiphage signaling system) provides immunity against bacteriophages. The CD-NTase protein (CdnD) synthesizes cyclic nucleotides in response to infection; these serve as specific second messenger signals. The signals activate a diverse range of effectors, leading to bacterial cell death and thus abortive phage infection. A type II-C(AAG) CBASS system. Binds second messenger 3',3',3'-cyclic AMP-AMP-GMP (cAAG). In the presence of cAAG (synthesized by the cognate CD-NTase protein in the CBASS operon), endonucleolytically degrades dsDNA to approximately 17 bp length fragments, with a preference for 5'-C|NG sites. Only binds DNA in the presence of cAAG. Not activated by c-di-AMP, c-di-GMP, 3',3'-cyclic GMP-AMP (cGAMP) or the second messenger of A.baumanii strain ATCC 27244. Its function is as follows. Protects E.coli against phage T2 infection. When the cdnD-cap2-cap3-cap4 operon is introduced in E.coli there is a more than 10(3) decrease in the efficiency of T2 plaque formation. The operon does not protect against phage T5 and only about 10-fold against T7. Expression of cdnD-cap4 alone protects E.coli against phage T2 infection. This Enterobacter hormaechei subsp. hoffmannii (strain UCI 50) protein is CD-NTase-associated protein 4.